We begin with the raw amino-acid sequence, 278 residues long: 2-(acetamidomethylene)succinate hydrolase (278 aa).

Chloride is bound by residues Ile-41 and 106–107 (SL). Residue Ser-106 is the Nucleophile of the active site. Active-site residues include Asp-130 and His-258.

Belongs to the AB hydrolase superfamily. Homodimer.

It carries out the reaction 2-(acetamidomethylene)succinate + 2 H2O + H(+) = succinate semialdehyde + acetate + NH4(+) + CO2. The protein operates within cofactor degradation; B6 vitamer degradation. Functionally, catalyzes the final reaction in the degradation of vitamin B6 from (E)-2-(acetamidomethylene)succinate (E-2AMS) to produce succinic semialdehyde, acetate, ammonia and carbon dioxide. In Mesorhizobium japonicum (strain LMG 29417 / CECT 9101 / MAFF 303099) (Mesorhizobium loti (strain MAFF 303099)), this protein is 2-(acetamidomethylene)succinate hydrolase.